The primary structure comprises 138 residues: MLSPKRTKYRKAHKGRIHGLAKGGTTLNFGAFGLKALEPERVTARQIEASRRAITRAMKRAGRVWIRIFPDLPVSTKPAEVRMGSGKGSPEYWVARVKPGRILFEIEGVPPELARQALALGAAKLPIKTKFVTRIGEA.

It belongs to the universal ribosomal protein uL16 family. As to quaternary structure, part of the 50S ribosomal subunit.

Functionally, binds 23S rRNA and is also seen to make contacts with the A and possibly P site tRNAs. The polypeptide is Large ribosomal subunit protein uL16 (Gluconacetobacter diazotrophicus (strain ATCC 49037 / DSM 5601 / CCUG 37298 / CIP 103539 / LMG 7603 / PAl5)).